The chain runs to 569 residues: Adenine deaminase (569 aa).

This sequence belongs to the metallo-dependent hydrolases superfamily. Adenine deaminase family. Mn(2+) is required as a cofactor.

The catalysed reaction is adenine + H2O + H(+) = hypoxanthine + NH4(+). The chain is Adenine deaminase from Desulfitobacterium hafniense (strain Y51).